The primary structure comprises 745 residues: Elongation factor G, mitochondrial (745 aa).

Residues M1–R15 constitute a mitochondrion transit peptide. One can recognise a tr-type G domain in the interval D40–G317. GTP contacts are provided by residues A49–T56, D116–H120, and N170–D173.

It belongs to the TRAFAC class translation factor GTPase superfamily. Classic translation factor GTPase family. EF-G/EF-2 subfamily.

It localises to the mitochondrion. It participates in protein biosynthesis; polypeptide chain elongation. In terms of biological role, mitochondrial GTPase that catalyzes the GTP-dependent ribosomal translocation step during translation elongation. During this step, the ribosome changes from the pre-translocational (PRE) to the post-translocational (POST) state as the newly formed A-site-bound peptidyl-tRNA and P-site-bound deacylated tRNA move to the P and E sites, respectively. Catalyzes the coordinated movement of the two tRNA molecules, the mRNA and conformational changes in the ribosome. Essential during development as it acts as a retrograde signal from mitochondria to the nucleus to slow down cell proliferation if mitochondrial energy output is low. The chain is Elongation factor G, mitochondrial (ico) from Drosophila ananassae (Fruit fly).